Here is a 510-residue protein sequence, read N- to C-terminus: NAD(P)H-quinone oxidoreductase subunit 2, chloroplastic (510 aa).

The next 11 membrane-spanning stretches (helical) occupy residues 24-44 (LLLF…GLIL), 59-79 (WFYF…LFRW), 99-119 (IFQF…VEYI), 124-144 (MAIT…MFLC), 149-169 (LITI…LSGY), 183-203 (YLLM…WLYG), 295-315 (WHLL…LIAI), 323-343 (MLAY…IVGD), 347-367 (GYAS…GTFA), 395-415 (ALSS…AGFF), and 418-438 (LHLF…IGLL).

This sequence belongs to the complex I subunit 2 family. In terms of assembly, NDH is composed of at least 16 different subunits, 5 of which are encoded in the nucleus.

The protein resides in the plastid. Its subcellular location is the chloroplast thylakoid membrane. The catalysed reaction is a plastoquinone + NADH + (n+1) H(+)(in) = a plastoquinol + NAD(+) + n H(+)(out). It catalyses the reaction a plastoquinone + NADPH + (n+1) H(+)(in) = a plastoquinol + NADP(+) + n H(+)(out). Functionally, NDH shuttles electrons from NAD(P)H:plastoquinone, via FMN and iron-sulfur (Fe-S) centers, to quinones in the photosynthetic chain and possibly in a chloroplast respiratory chain. The immediate electron acceptor for the enzyme in this species is believed to be plastoquinone. Couples the redox reaction to proton translocation, and thus conserves the redox energy in a proton gradient. In Maianthemum racemosum (False Solomon's-seal), this protein is NAD(P)H-quinone oxidoreductase subunit 2, chloroplastic.